Reading from the N-terminus, the 292-residue chain is MAGLDLGTAFRYVNHQLHRPDLHLHHNSSSDDVTPGAGMGHFTVDDEDNNNNHQGLDLASGGGSGSSGGGGGHGGGGDVVGRRPRGRPPGSKNKPKPPVIITRESANTLRAHILEVTNGCDVFDCVATYARRRQRGICVLSGSGTVTNVSIRQPSAAGAVVTLQGTFEILSLSGSFLPPPAPPGATSLTIFLAGGQGQVVGGSVVGELTAAGPVIVIAASFTNVAYERLPLEEDEQQQQLGGGSNGGGNLFPEVAAGGGGGLPFFNLPMNMQPNVQLPVEGWPGNSGGRGPF.

A disordered region spans residues 23–100 (HLHHNSSSDD…SKNKPKPPVI (78 aa)). The segment covering 60-79 (SGGGSGSSGGGGGHGGGGDV) has biased composition (gly residues). The a.T hook DNA-binding region spans 82-94 (RRPRGRPPGSKNK). In terms of domain architecture, PPC spans 106–242 (ANTLRAHILE…EDEQQQQLGG (137 aa)).

It is found in the nucleus. Functionally, transcription factor that specifically binds AT-rich DNA sequences related to the nuclear matrix attachment regions (MARs). The chain is AT-hook motif nuclear-localized protein 23 from Arabidopsis thaliana (Mouse-ear cress).